The chain runs to 119 residues: MFKKNDRSQSRERRHMRVRKKIFGTAERPRLSVYRSEKHIYAQLIDDVEGKTLVAASSSEKGFDGVGSNKEGAKLVGKMIAEKALEKGLKKVVFDRGGFIYHGRIKELAEGAREAGLDF.

It belongs to the universal ribosomal protein uL18 family. Part of the 50S ribosomal subunit; part of the 5S rRNA/L5/L18/L25 subcomplex. Contacts the 5S and 23S rRNAs.

In terms of biological role, this is one of the proteins that bind and probably mediate the attachment of the 5S RNA into the large ribosomal subunit, where it forms part of the central protuberance. The protein is Large ribosomal subunit protein uL18 of Clostridium botulinum (strain Loch Maree / Type A3).